A 129-amino-acid chain; its full sequence is UPF0047 protein Mb2586c (129 aa).

This sequence belongs to the UPF0047 family.

In Mycobacterium bovis (strain ATCC BAA-935 / AF2122/97), this protein is UPF0047 protein Mb2586c.